We begin with the raw amino-acid sequence, 133 residues long: Putative pre-16S rRNA nuclease (133 aa).

This sequence belongs to the YqgF nuclease family.

Its subcellular location is the cytoplasm. In terms of biological role, could be a nuclease involved in processing of the 5'-end of pre-16S rRNA. In Bordetella pertussis (strain Tohama I / ATCC BAA-589 / NCTC 13251), this protein is Putative pre-16S rRNA nuclease.